A 275-amino-acid chain; its full sequence is Succinate dehydrogenase [ubiquinone] iron-sulfur subunit, mitochondrial (275 aa).

The N-terminal 24 residues, 1 to 24, are a transit peptide targeting the mitochondrion; it reads MFSRRIQVLSPFLKHFVNRNARMM. Residues 57–137 form the 2Fe-2S ferredoxin-type domain; the sequence is PEVKPKLQKY…PTKIYPLPHC (81 aa). Residues Cys-98, Cys-103, Cys-106, and Cys-118 each coordinate [2Fe-2S] cluster. One can recognise a 4Fe-4S ferredoxin-type domain in the interval 178-208; that stretch reads DRAKLDGLYECILCACCSTSCPSYWWNSEEY. Positions 188, 191, and 194 each coordinate [4Fe-4S] cluster. Cys-198 contributes to the [3Fe-4S] cluster binding site. Trp-203 is a binding site for a ubiquinone. Residues Cys-245 and Cys-251 each coordinate [3Fe-4S] cluster. Cys-255 contributes to the [4Fe-4S] cluster binding site.

The protein belongs to the succinate dehydrogenase/fumarate reductase iron-sulfur protein family. As to quaternary structure, component of complex II composed of four subunits: a flavoprotein (FP), an iron-sulfur protein (IP), and a cytochrome b composed of a large and a small subunit. It depends on [2Fe-2S] cluster as a cofactor. The cofactor is [3Fe-4S] cluster. [4Fe-4S] cluster is required as a cofactor.

It is found in the mitochondrion inner membrane. The enzyme catalyses a quinone + succinate = fumarate + a quinol. The protein operates within carbohydrate metabolism; tricarboxylic acid cycle; fumarate from succinate (eukaryal route): step 1/1. In terms of biological role, iron-sulfur protein (IP) subunit of succinate dehydrogenase (SDH) that is involved in complex II of the mitochondrial electron transport chain and is responsible for transferring electrons from succinate to ubiquinone (coenzyme Q). This chain is Succinate dehydrogenase [ubiquinone] iron-sulfur subunit, mitochondrial (sdh2), found in Schizosaccharomyces pombe (strain 972 / ATCC 24843) (Fission yeast).